Reading from the N-terminus, the 439-residue chain is Diaminopimelate decarboxylase (439 aa).

An N6-(pyridoxal phosphate)lysine modification is found at Lys66. Residues Gly248 and 290–293 contribute to the pyridoxal 5'-phosphate site; that span reads EPGR. The substrate site is built by Arg293, Arg330, and Tyr334. Cys361 functions as the Proton donor in the catalytic mechanism. Substrate is bound by residues Glu362 and Tyr390. Tyr390 is a pyridoxal 5'-phosphate binding site.

This sequence belongs to the Orn/Lys/Arg decarboxylase class-II family. LysA subfamily. In terms of assembly, homodimer. Pyridoxal 5'-phosphate is required as a cofactor.

The enzyme catalyses meso-2,6-diaminopimelate + H(+) = L-lysine + CO2. It functions in the pathway amino-acid biosynthesis; L-lysine biosynthesis via DAP pathway; L-lysine from DL-2,6-diaminopimelate: step 1/1. Specifically catalyzes the decarboxylation of meso-diaminopimelate (meso-DAP) to L-lysine. This chain is Diaminopimelate decarboxylase, found in Halalkalibacterium halodurans (strain ATCC BAA-125 / DSM 18197 / FERM 7344 / JCM 9153 / C-125) (Bacillus halodurans).